Reading from the N-terminus, the 298-residue chain is Protease HtpX homolog (298 aa).

2 helical membrane passes run 14–34 (VVLL…AGYL) and 39–59 (YAMG…SMIF). Histidine 143 provides a ligand contact to Zn(2+). The active site involves glutamate 144. Histidine 147 lines the Zn(2+) pocket. The next 2 membrane-spanning stretches (helical) occupy residues 158-178 (IAVA…RMLW) and 197-217 (IITL…ASLI). Position 226 (glutamate 226) interacts with Zn(2+).

Belongs to the peptidase M48B family. Zn(2+) serves as cofactor.

It is found in the cell membrane. The chain is Protease HtpX homolog from Streptococcus pyogenes serotype M1.